The following is a 145-amino-acid chain: Monooxygenase AacuP (145 aa).

This sequence belongs to the avfA family.

Its pathway is secondary metabolite biosynthesis. Its function is as follows. Monooxygenase; part of the gene cluster that mediates the biosynthesis of the tetrahydroxanthone dimer secalonic acid D. The pathway begins with the synthesis of atrochrysone thioester by the polyketide synthase AacuL. The atrochrysone carboxyl ACP thioesterase AacuM then breaks the thioester bond and releases the atrochrysone carboxylic acid from AacuL. Atrochrysone carboxylic acid is decarboxylated by the decarboxylase AacuI, and oxidized by the anthrone oxygenase AacuG to yield emodin. Emodin is then reduced to emodin hydroquinone by a yet unidentified oxidoreductase. A-ring reduction by the short chain dehydrogenase AacuN, dehydration by the scytalone dehydratase-like protein AacuK and probable spontaneous re-oxidation, results in overall deoxygenation to chrysophanol. Baeyer-Villiger oxidation by the Baeyer-Villiger monooxygenase (BVMO) AacuH then yields monodictyphenone. Monodictyphenone is transformed into compounds with the tetrahydroxanthone skeleton via methylesterification by the methyltransferase AacuQ, followed by the action of the flavin-dependent monooxygenase AacuC, the isomerase AacuP, and the short chain dehydrogenase/reductase AacuF or AacuD. AacuF and AacuD should accept the same compound as a substrate but perform the ketoreduction with a different stereoselectivity, thus yielding blennolides B and A, respectively. In the final step of the biosynthesis, the cytochrome P450 monooxygenase AacuE accepts blennolide B and/or blennolide A to conduct the dimerization reaction to furnish the tetrahydroxanthone dimers, secalonic acids D, B, and F. The polypeptide is Monooxygenase AacuP (Aspergillus aculeatus (strain ATCC 16872 / CBS 172.66 / WB 5094)).